The primary structure comprises 118 residues: Putative protein p10 (118 aa).

This is Putative protein p10 (10) from Acyrthosiphon pisum secondary endosymbiont phage 1 (Bacteriophage APSE-1).